A 102-amino-acid chain; its full sequence is Protamine-2 (102 aa).

The disordered stretch occupies residues 1-102; the sequence is MVRCRVRSPS…RTRRRTCRRH (102 aa). 3 positions are modified to phosphoserine: Ser8, Ser10, and Ser37. The span at 8-17 shows a compositional bias: basic and acidic residues; sequence SPSERSHEVY. The span at 39-48 shows a compositional bias: basic and acidic residues; it reads EHVEVYERTH. The segment covering 49–102 has biased composition (basic residues); it reads GHSHYRRRHCSRRRLRRIHRQQHRSCRRRKRRSCRHRRRHRKGCRTRRRTCRRH.

The protein belongs to the protamine P2 family. In terms of assembly, interacts with TDRP. Proteolytic processing into mature chains is required for histone eviction during spermatogenesis. Transition proteins (TNP1 and TNP2) are required for processing. Testis.

The protein resides in the nucleus. The protein localises to the chromosome. Protamines substitute for histones in the chromatin of sperm during the haploid phase of spermatogenesis. They compact sperm DNA into a highly condensed, stable and inactive complex. The protein is Protamine-2 (PRM2) of Gorilla gorilla gorilla (Western lowland gorilla).